Reading from the N-terminus, the 908-residue chain is MADGVIARLMSGGRGARSFYEELRGRDNVSDVDDRAGLLDEENLNQHFNDYDLENAEGLRLEDSRATVDGRIPRGRAQLSGRPPRPAATTHWGTSHDDDGDNDVPASLLVERYDRGAAPLGSPGKPRSQHAGSRAHPAPGLSKGRTHQQRPHIDQELQPPLHSDAAPSSLLAGAITGNAKKMAEWRWANITNLDSFMQDVYSYYRGSGMWCIVVERVLHLIKVAFVAFLLTFLSQCVDFKKIPSNQKLSQVLVPQCTRNMSGLWNIGLWLFAFYFMWKSIQYILDLRRLTHVRDFYIHLLNIPDEDMQTITWQEVVARIMVLRDQNVRTTRTITPQNQRWVLGSQSKERLDASDIANRLMRRENYMIAMINKDILDLTIPLPILRNRQLLSQTLEWTLMFSILDFVFDPKGQVHQEFLRSDRRGILSAKLRSRFIFAGVMILILSPFVAGYLIIVYFLEYYNEIQKNPSILSARSYTPLAEWKFREFNELPHLFKRRLDMSHPFASHYIDQFPKAKTSMVAKTVSFIAGSIATVLALISVFDPEMFLGFEITHDRTVLFYTAVFGAIWSVARGSVSEDNAVFDPEYALGNVVEYTHYQPEHWKDRWHSADVKAEFEELYKLKLVIFIEEILSILTTPFVLFFSLPKSADQIIDFFREFTIHVDGLGYVCYFAEFDFKKGSKSQAPAATAGEGDVRDDYYSTKHGKMEASMYGFINNYARNPKHLPPAMRQQFHLPPVFPGITSPTLAGDLAASRMGRSQRGRSKGPLPSRTPRPGAVMAEPSPMASILLDPRHQPIFPNNMSFVNTGHQFRGGNQGDGHMMGGGSMEEDVKGAARHGQQTHDDESEDSRAGLDESAWQVSPTKDLSRENSGRGLDSVVGEEAGNGAGVVHMLYQFNQAHLNRRLGGVR.

The Cytoplasmic segment spans residues 1–216; sequence MADGVIARLM…SGMWCIVVER (216 aa). The disordered stretch occupies residues 64 to 162; that stretch reads SRATVDGRIP…IDQELQPPLH (99 aa). The chain crosses the membrane as a helical span at residues 217–237; it reads VLHLIKVAFVAFLLTFLSQCV. Over 238–259 the chain is Lumenal; that stretch reads DFKKIPSNQKLSQVLVPQCTRN. Asparagine 259 carries an N-linked (GlcNAc...) asparagine glycan. Residues 260–280 traverse the membrane as a helical segment; sequence MSGLWNIGLWLFAFYFMWKSI. Residues 281–433 lie on the Cytoplasmic side of the membrane; that stretch reads QYILDLRRLT…GILSAKLRSR (153 aa). Residues 434–454 lie within the membrane without spanning it; that stretch reads FIFAGVMILILSPFVAGYLII. The Cytoplasmic portion of the chain corresponds to 455–525; it reads VYFLEYYNEI…KTSMVAKTVS (71 aa). The helical transmembrane segment at 526–546 threads the bilayer; it reads FIAGSIATVLALISVFDPEMF. Residues 547–555 lie on the Lumenal side of the membrane; sequence LGFEITHDR. A helical membrane pass occupies residues 556 to 576; sequence TVLFYTAVFGAIWSVARGSVS. Residues 577–622 lie on the Cytoplasmic side of the membrane; it reads EDNAVFDPEYALGNVVEYTHYQPEHWKDRWHSADVKAEFEELYKLK. Residues 623 to 643 lie within the membrane without spanning it; the sequence is LVIFIEEILSILTTPFVLFFS. Over 644–908 the chain is Cytoplasmic; that stretch reads LPKSADQIID…HLNRRLGGVR (265 aa). 2 disordered regions span residues 751–779 and 809–878; these read AASR…AVMA and QFRG…DSVV. Residues 813 to 825 show a composition bias toward gly residues; sequence GNQGDGHMMGGGS. The span at 839–852 shows a compositional bias: basic and acidic residues; the sequence is QTHDDESEDSRAGL.

This sequence belongs to the ATG9 family. In terms of assembly, homotrimer; forms a homotrimer with a central pore that forms a path between the two membrane leaflets. In terms of processing, phosphorylated by apg-1. Apg-1 phosphorylation is required for preautophagosome elongation.

The protein resides in the preautophagosomal structure membrane. It is found in the cytoplasmic vesicle membrane. Its subcellular location is the golgi apparatus membrane. It localises to the endoplasmic reticulum membrane. The catalysed reaction is a 1,2-diacyl-sn-glycero-3-phosphocholine(in) = a 1,2-diacyl-sn-glycero-3-phosphocholine(out). It carries out the reaction a 1,2-diacyl-sn-glycero-3-phospho-L-serine(in) = a 1,2-diacyl-sn-glycero-3-phospho-L-serine(out). The enzyme catalyses a 1,2-diacyl-sn-glycero-3-phosphoethanolamine(in) = a 1,2-diacyl-sn-glycero-3-phosphoethanolamine(out). It catalyses the reaction a 1,2-diacyl-sn-glycero-3-phospho-(1D-myo-inositol-3-phosphate)(in) = a 1,2-diacyl-sn-glycero-3-phospho-(1D-myo-inositol-3-phosphate)(out). Functionally, phospholipid scramblase involved in autophagy and cytoplasm to vacuole transport (Cvt) vesicle formation. Cycles between the preautophagosomal structure/phagophore assembly site (PAS) and the cytoplasmic vesicle pool and supplies membrane for the growing autophagosome. Lipid scramblase activity plays a key role in preautophagosomal structure/phagophore assembly by distributing the phospholipids that arrive through atg-2 from the cytoplasmic to the luminal leaflet of the bilayer, thereby driving autophagosomal membrane expansion. Required for mitophagy. Also involved in endoplasmic reticulum-specific autophagic process and is essential for the survival of cells subjected to severe ER stress. Different machineries are required for anterograde trafficking to the PAS during either the Cvt pathway or bulk autophagy and for retrograde trafficking. The sequence is that of Autophagy-related protein 9 (apg-7) from Neurospora crassa (strain ATCC 24698 / 74-OR23-1A / CBS 708.71 / DSM 1257 / FGSC 987).